Consider the following 406-residue polypeptide: Type IV pilus assembly protein PilC (406 aa).

4 helical membrane-spanning segments follow: residues 69-91, 171-191, 211-231, and 377-397; these read IFSR…LAIL, YPVI…TGIV, FLIA…LLAV, and MIIF…LPLF.

Belongs to the GSP F family. As to quaternary structure, homotetramer. Interacts with PilB.

It is found in the cell inner membrane. Functionally, essential inner membrane component of the type IV pilus (T4P) that plays a role in surface and host cell adhesion, colonization, biofilm maturation, virulence, and twitching, a form of surface-associated motility facilitated by cycles of extension, adhesion, and retraction of T4P fibers. Controls both pilus assembly and disassembly and plays an important role in PilB localization to the complex and ATPase activity. This chain is Type IV pilus assembly protein PilC, found in Thermus thermophilus (strain ATCC 27634 / DSM 579 / HB8).